The primary structure comprises 180 residues: MQPTSSMNEEFLKKWQMGLQIFRPSIDNTSVHERKKAIKLSADVAMASLRKGTTCWSRALIEKTATEDNFLVRQMLSGIKAETLINKKLPKKTVCHRKIVRRSKKILRRKSKSASEEAAAKAKRLVKRRTQGLRNVVPGGELMSNDVLLLQETLDYIVSLQTQVNVMRSIVDAAEAEIER.

Positions 110–160 constitute a bHLH domain; sequence KSKSASEEAAAKAKRLVKRRTQGLRNVVPGGELMSNDVLLLQETLDYIVSL.

This sequence belongs to the bHLH protein family.

Its subcellular location is the nucleus. Its function is as follows. Functions redundandly with IBH1/BHLH158 in a regulation node known as the incoherent feed-forward loop (FFL). Acts as transcriptional repressor that negatively regulates cell and organ elongation in response to gibberellin (GA) and brassinosteroid (BR) signaling. The chain is Transcription factor IBH1-like 1 from Arabidopsis thaliana (Mouse-ear cress).